A 309-amino-acid polypeptide reads, in one-letter code: Low-density lipoprotein receptor-related protein 1 (309 aa).

The protein belongs to the LDLR family.

It is found in the endoplasmic reticulum. It localises to the golgi apparatus. The protein resides in the endosome. Involved in endocytosis, fatty acid beta-oxidation and infectious growth. Plays a critical role in the accumulation of MSN2 from the cytosol to the nucleus by activating the cyclic AMP signaling pathway. MSN2 can then target the dienoyl-coenzyme A isomerase DCI1 and other genes involved in fatty acid beta-oxidation, which is important for lipid droplets degradation and infectious growth. The sequence is that of Low-density lipoprotein receptor-related protein 1 from Pyricularia oryzae (strain 70-15 / ATCC MYA-4617 / FGSC 8958) (Rice blast fungus).